The primary structure comprises 190 residues: Ribosome maturation factor RimM (190 aa).

The 77-residue stretch at 95–171 (DPDEFYDHEL…VVMIEPPEGL (77 aa)) folds into the PRC barrel domain. The segment at 169 to 190 (EGLLDPDFGDKSNSDNSNSDND) is disordered.

The protein belongs to the RimM family. Binds ribosomal protein uS19.

The protein resides in the cytoplasm. An accessory protein needed during the final step in the assembly of 30S ribosomal subunit, possibly for assembly of the head region. Essential for efficient processing of 16S rRNA. May be needed both before and after RbfA during the maturation of 16S rRNA. It has affinity for free ribosomal 30S subunits but not for 70S ribosomes. The sequence is that of Ribosome maturation factor RimM from Rhodococcus erythropolis (strain PR4 / NBRC 100887).